Consider the following 324-residue polypeptide: Beta-ketoacyl-[acyl-carrier-protein] synthase III (324 aa).

Catalysis depends on residues cysteine 114 and histidine 246. The interval glutamine 247–arginine 251 is ACP-binding. Asparagine 276 is an active-site residue.

This sequence belongs to the thiolase-like superfamily. FabH family. As to quaternary structure, homodimer.

The protein resides in the cytoplasm. It carries out the reaction malonyl-[ACP] + acetyl-CoA + H(+) = 3-oxobutanoyl-[ACP] + CO2 + CoA. The protein operates within lipid metabolism; fatty acid biosynthesis. In terms of biological role, catalyzes the condensation reaction of fatty acid synthesis by the addition to an acyl acceptor of two carbons from malonyl-ACP. Catalyzes the first condensation reaction which initiates fatty acid synthesis and may therefore play a role in governing the total rate of fatty acid production. Possesses both acetoacetyl-ACP synthase and acetyl transacylase activities. Its substrate specificity determines the biosynthesis of branched-chain and/or straight-chain of fatty acids. The protein is Beta-ketoacyl-[acyl-carrier-protein] synthase III of Campylobacter jejuni subsp. doylei (strain ATCC BAA-1458 / RM4099 / 269.97).